The sequence spans 259 residues: Probable iron export permease protein FetB (259 aa).

Residues 1–5 lie on the Periplasmic side of the membrane; the sequence is MNSHN. The helical transmembrane segment at 6-26 threads the bilayer; the sequence is ITNESLALALMLVVVAILISH. The Cytoplasmic portion of the chain corresponds to 27 to 35; it reads KEKLALEKD. Transmembrane regions (helical) follow at residues 36–56 and 57–77; these read ILWS…VLKY and IFSV…CFNA. At 78–91 the chain is on the cytoplasmic side; the sequence is AWNAQKRSKYIAKA. The chain crosses the membrane as a helical span at residues 92 to 112; that stretch reads FISSFIAITVGAGITLAVLIL. Topologically, residues 113–117 are periplasmic; that stretch reads SGSIE. The chain crosses the membrane as a helical span at residues 118-138; sequence FIPMQVIPIAGMIAGNAMVAV. Residues 139 to 191 are Cytoplasmic-facing; sequence GLCYNNLGQRVISEQQQIQEKLSLGATPKQASAILIRDSIRAALIPTVDSAKT. The helical transmembrane segment at 192 to 212 threads the bilayer; sequence VGLVSLPGMMSGLIFAGIDPV. Residues 213–218 are Periplasmic-facing; sequence KAIKYQ. Residues 219 to 239 form a helical membrane-spanning segment; the sequence is IMVTFMLLSTASLSTIIACYL. The Cytoplasmic segment spans residues 240–259; the sequence is TYRKFYNSRHQLVVTQLKKK.

This sequence belongs to the UPF0014 family. As to quaternary structure, the complex is composed of two ATP-binding proteins (FetA) and two transmembrane proteins (FetB).

It is found in the cell inner membrane. Part of the ABC transporter complex FetAB, which is probably involved in iron export and enhances resistance to H(2)O(2)-mediated oxidative stress. Probably responsible for the translocation of the substrate across the membrane. This chain is Probable iron export permease protein FetB (fetB), found in Escherichia coli (strain K12).